The sequence spans 100 residues: Succinate dehydrogenase subunit 7B, mitochondrial (100 aa).

The disordered stretch occupies residues 1–25 (MAFLLNNASISSHLRSSSSQKTGDA). The N-terminal 32 residues, 1–32 (MAFLLNNASISSHLRSSSSQKTGDALSISRRG), are a transit peptide targeting the mitochondrion. Residues 9 to 19 (SISSHLRSSSS) show a composition bias toward low complexity.

As to quaternary structure, component of complex II composed of eight subunits in plants: four classical SDH subunits SDH1, SDH2, SDH3 and SDH4 (a flavoprotein (FP), an iron-sulfur protein (IP), and a cytochrome b composed of a large and a small subunit.), as well as four subunits unknown in mitochondria from bacteria and heterotrophic eukaryotes.

The protein localises to the mitochondrion inner membrane. It functions in the pathway carbohydrate metabolism; tricarboxylic acid cycle. This is Succinate dehydrogenase subunit 7B, mitochondrial from Arabidopsis thaliana (Mouse-ear cress).